Consider the following 361-residue polypeptide: Eukaryotic translation initiation factor 3 subunit F (361 aa).

Composition is skewed to low complexity over residues 1-11 and 21-42; these read MATPVVSASGP and AAPA…AAAV. The interval 1-42 is disordered; sequence MATPVVSASGPPATPAPAPVAAPASASASVPAPTPAPAAAAV. An N-acetylalanine modification is found at Ala-2. Ser-50 carries the post-translational modification Phosphoserine; by CDK11; in vitro. The span at 55–78 shows a compositional bias: low complexity; that stretch reads AAAATTAAPGQTPASAQAPAQTPA. The segment at 55–86 is disordered; the sequence is AAAATTAAPGQTPASAQAPAQTPAPALPGPAL. One can recognise an MPN domain in the interval 96 to 226; the sequence is VRLHPVILAS…IKAYVSTLMG (131 aa). Lys-242 carries the post-translational modification N6-acetyllysine. Position 262 is a phosphoserine (Ser-262).

This sequence belongs to the eIF-3 subunit F family. In terms of assembly, component of the eukaryotic translation initiation factor 3 (eIF-3) complex, which is composed of 13 subunits: EIF3A, EIF3B, EIF3C, EIF3D, EIF3E, EIF3F, EIF3G, EIF3H, EIF3I, EIF3J, EIF3K, EIF3L and EIF3M. The eIF-3 complex appears to include 3 stable modules: module A is composed of EIF3A, EIF3B, EIF3G and EIF3I; module B is composed of EIF3F, EIF3H, and EIF3M; and module C is composed of EIF3C, EIF3D, EIF3E, EIF3K and EIF3L. EIF3C of module C binds EIF3B of module A and EIF3H of module B, thereby linking the three modules. EIF3J is a labile subunit that binds to the eIF-3 complex via EIF3B. The eIF-3 complex interacts with RPS6KB1 under conditions of nutrient depletion. Mitogenic stimulation leads to binding and activation of a complex composed of MTOR and RPTOR, leading to phosphorylation and release of RPS6KB1 and binding of EIF4B to eIF-3. Interacts with RNF139; the interaction leads to protein translation inhibitions in a ubiquitination-dependent manner. Interacts with DTX1, the interaction is required for deubiquitinating activity towards NOTCH1. Phosphorylation is enhanced upon serum stimulation. Phosphorylated during apoptosis by caspase-processed CDK11.

Its subcellular location is the cytoplasm. It catalyses the reaction Thiol-dependent hydrolysis of ester, thioester, amide, peptide and isopeptide bonds formed by the C-terminal Gly of ubiquitin (a 76-residue protein attached to proteins as an intracellular targeting signal).. Functionally, component of the eukaryotic translation initiation factor 3 (eIF-3) complex, which is required for several steps in the initiation of protein synthesis. The eIF-3 complex associates with the 40S ribosome and facilitates the recruitment of eIF-1, eIF-1A, eIF-2:GTP:methionyl-tRNAi and eIF-5 to form the 43S pre-initiation complex (43S PIC). The eIF-3 complex stimulates mRNA recruitment to the 43S PIC and scanning of the mRNA for AUG recognition. The eIF-3 complex is also required for disassembly and recycling of post-termination ribosomal complexes and subsequently prevents premature joining of the 40S and 60S ribosomal subunits prior to initiation. The eIF-3 complex specifically targets and initiates translation of a subset of mRNAs involved in cell proliferation, including cell cycling, differentiation and apoptosis, and uses different modes of RNA stem-loop binding to exert either translational activation or repression. In terms of biological role, deubiquitinates activated NOTCH1, promoting its nuclear import, thereby acting as a positive regulator of Notch signaling. This is Eukaryotic translation initiation factor 3 subunit F from Macaca fascicularis (Crab-eating macaque).